A 581-amino-acid polypeptide reads, in one-letter code: Ras-specific guanine nucleotide-releasing factor RalGPS1 (581 aa).

The disordered stretch occupies residues 1-31 (MYRRNGLPASVSITSRNTQDSSSSESLDGRS). One can recognise a Ras-GEF domain in the interval 49 to 288 (TPEEFASQIT…YSLSLKIEPG (240 aa)). The disordered stretch occupies residues 320–339 (PDTSVVAHLPTPPPARHRKS). Residues 329–332 (PTPP) carry the PXXP motif. The 113-residue stretch at 455 to 567 (SITIEGPLRR…WHRHLAEACR (113 aa)) folds into the PH domain.

The protein resides in the cytoplasm. It is found in the cell membrane. Its function is as follows. Guanine nucleotide exchange factor. May be involved in cytoskeletal organization. In Danio rerio (Zebrafish), this protein is Ras-specific guanine nucleotide-releasing factor RalGPS1 (ralgps1).